The following is a 526-amino-acid chain: MSYPQEVNKRRTFAIISHPDAGKTTITEKVLLYGNAIQTAGSVKGKGSSQHAKSDWMEMEKQRGISITTSVMQFPYNNCLVNLLDTPGHEDFSEDTYRTLTAVDSCLMVIDSAKGVEERTIKLMEVTRLRDTPILTFMNKLDRDIRDPMELLDEVESILKIRCAPITWPIGCGKLFKGVYHLAKDEMYLYKSGQGSTIQEIQIVKGLDNPELDVMVGDDLANQLREELELVQGASNEFDHQAFINGELTPVFFGTALGNFGVDHFLDGLTEWAPKPQARVADIRTVESAEQKFSGFVFKIQANMDPKHRDRVAFMRVVSGKYEKGMKLKHVRLGKEVVISDALIFMAGDRSQAEQAYAGDIIGLHNHGTIQIGDTFTQGENLKFIGIPNFAPELFRRIRLKDPLKQKQLLKGLIQLSEEGAVQVFRPLINNDLIVGAVGVLQFDVVVSRLKSEYNVEAIYETVNVATARWVECTDAKKFEEFKRKNEQNLALDGGDNLTYIAPTMVNLNLAIERYPDVVFFKTREH.

The tr-type G domain maps to 8 to 277; that stretch reads NKRRTFAIIS…GLTEWAPKPQ (270 aa). GTP-binding positions include 17–24, 85–89, and 139–142; these read SHPDAGKT, DTPGH, and NKLD.

Belongs to the TRAFAC class translation factor GTPase superfamily. Classic translation factor GTPase family. PrfC subfamily.

It is found in the cytoplasm. Functionally, increases the formation of ribosomal termination complexes and stimulates activities of RF-1 and RF-2. It binds guanine nucleotides and has strong preference for UGA stop codons. It may interact directly with the ribosome. The stimulation of RF-1 and RF-2 is significantly reduced by GTP and GDP, but not by GMP. This chain is Peptide chain release factor 3, found in Haemophilus ducreyi (strain 35000HP / ATCC 700724).